Reading from the N-terminus, the 513-residue chain is ATP synthase subunit alpha (513 aa).

169–176 (GDRQTGKT) is an ATP binding site.

The protein belongs to the ATPase alpha/beta chains family. In terms of assembly, F-type ATPases have 2 components, CF(1) - the catalytic core - and CF(0) - the membrane proton channel. CF(1) has five subunits: alpha(3), beta(3), gamma(1), delta(1), epsilon(1). CF(0) has three main subunits: a(1), b(2) and c(9-12). The alpha and beta chains form an alternating ring which encloses part of the gamma chain. CF(1) is attached to CF(0) by a central stalk formed by the gamma and epsilon chains, while a peripheral stalk is formed by the delta and b chains.

Its subcellular location is the cell inner membrane. The enzyme catalyses ATP + H2O + 4 H(+)(in) = ADP + phosphate + 5 H(+)(out). Produces ATP from ADP in the presence of a proton gradient across the membrane. The alpha chain is a regulatory subunit. This is ATP synthase subunit alpha from Ruegeria sp. (strain TM1040) (Silicibacter sp.).